Reading from the N-terminus, the 441-residue chain is Ribulose bisphosphate carboxylase large chain (441 aa).

Asparagine 89 and threonine 139 together coordinate substrate. Lysine 141 (proton acceptor) is an active-site residue. Residue lysine 143 coordinates substrate. Residues lysine 167, aspartate 169, and glutamate 170 each coordinate Mg(2+). N6-carboxylysine is present on lysine 167. Histidine 260 (proton acceptor) is an active-site residue. Residues arginine 261, histidine 293, and serine 345 each contribute to the substrate site.

This sequence belongs to the RuBisCO large chain family. Type I subfamily. In terms of assembly, heterohexadecamer of 8 large chains and 8 small chains; disulfide-linked. The disulfide link is formed within the large subunit homodimers. The cofactor is Mg(2+). In terms of processing, the disulfide bond which can form in the large chain dimeric partners within the hexadecamer appears to be associated with oxidative stress and protein turnover.

It is found in the plastid. It localises to the chloroplast. It carries out the reaction 2 (2R)-3-phosphoglycerate + 2 H(+) = D-ribulose 1,5-bisphosphate + CO2 + H2O. The enzyme catalyses D-ribulose 1,5-bisphosphate + O2 = 2-phosphoglycolate + (2R)-3-phosphoglycerate + 2 H(+). RuBisCO catalyzes two reactions: the carboxylation of D-ribulose 1,5-bisphosphate, the primary event in carbon dioxide fixation, as well as the oxidative fragmentation of the pentose substrate in the photorespiration process. Both reactions occur simultaneously and in competition at the same active site. The sequence is that of Ribulose bisphosphate carboxylase large chain from Symphoricarpos albus (Common snowberry).